Consider the following 616-residue polypeptide: tRNA uridine 5-carboxymethylaminomethyl modification enzyme MnmG (616 aa).

Residues 10–15 (GAGHAG), V122, and S177 each bind FAD. 271-285 (GPRYCPSIEDKVVRF) provides a ligand contact to NAD(+). Q368 lines the FAD pocket.

It belongs to the MnmG family. As to quaternary structure, homodimer. Heterotetramer of two MnmE and two MnmG subunits. It depends on FAD as a cofactor.

It localises to the cytoplasm. Functionally, NAD-binding protein involved in the addition of a carboxymethylaminomethyl (cmnm) group at the wobble position (U34) of certain tRNAs, forming tRNA-cmnm(5)s(2)U34. This chain is tRNA uridine 5-carboxymethylaminomethyl modification enzyme MnmG, found in Malacoplasma penetrans (strain HF-2) (Mycoplasma penetrans).